A 482-amino-acid polypeptide reads, in one-letter code: uncharacterized protein (482 aa).

12 consecutive transmembrane segments (helical) span residues 40 to 57 (LDWY…LSFL), 83 to 103 (AAVS…VLLV), 109 to 129 (HYYL…TCFV), 140 to 160 (LLLG…ISMT), 170 to 190 (LAYL…IATG), 205 to 225 (WLYI…LFCL), 278 to 298 (VIQF…PSIL), 311 to 331 (YMSV…CLLS), 338 to 358 (GWFI…LLAT), 366 to 386 (VATY…ITWI), 399 to 418 (ALGC…GQVY), and 428 to 448 (GFAL…RFYL).

The protein belongs to the major facilitator superfamily. Allantoate permease family.

The protein resides in the endoplasmic reticulum. It is found in the membrane. This is an uncharacterized protein from Schizosaccharomyces pombe (strain 972 / ATCC 24843) (Fission yeast).